A 145-amino-acid polypeptide reads, in one-letter code: Ribonuclease H (145 aa).

The region spanning 1 to 141 (MQEVTIYSDG…ADALANRGVA (141 aa)) is the RNase H type-1 domain. Mg(2+)-binding residues include Asp-9, Glu-47, Asp-69, and Asp-133.

This sequence belongs to the RNase H family. As to quaternary structure, monomer. Mg(2+) serves as cofactor.

It is found in the cytoplasm. It carries out the reaction Endonucleolytic cleavage to 5'-phosphomonoester.. Endonuclease that specifically degrades the RNA of RNA-DNA hybrids. The protein is Ribonuclease H of Cupriavidus metallidurans (strain ATCC 43123 / DSM 2839 / NBRC 102507 / CH34) (Ralstonia metallidurans).